Consider the following 351-residue polypeptide: Rhodopsin (351 aa).

The Extracellular portion of the chain corresponds to 1-36 (MNGTEGQDFYVPMSNKTGVVRSPFEYPQYYLAEPWK). N-linked (GlcNAc...) asparagine glycosylation is found at asparagine 2 and asparagine 15. A helical transmembrane segment spans residues 37–61 (FSALAAYMFMLILLGFPVNFLTLYV). Over 62–73 (TIQHKKLRTPLN) the chain is Cytoplasmic. The helical transmembrane segment at 74 to 96 (YILLNLVVADLFMVFGGFTTTMY) threads the bilayer. Residues 97–110 (TSMNGYFVFGVTGC) are Extracellular-facing. Cysteine 110 and cysteine 187 are oxidised to a cystine. A helical membrane pass occupies residues 111 to 133 (YIEGFFATLGGEIALWSLVVLAV). Residues 134–136 (ERY) carry the 'Ionic lock' involved in activated form stabilization motif. The Cytoplasmic segment spans residues 134–152 (ERYVVVCKPMSNFRFGENH). Residues 153–173 (AIMGVAFSWIMAMACAAPPLF) form a helical membrane-spanning segment. The Extracellular portion of the chain corresponds to 174–202 (GWSRYIPEGMQCSCGIDYYTLKPEINNES). A helical membrane pass occupies residues 203–224 (FVIYMFVVHFMIPLAVIFFCYG). Topologically, residues 225–252 (NLVCTVKEAAAQQQESATTQKAEKEVTR) are cytoplasmic. A helical transmembrane segment spans residues 253–274 (MVIIMVIAFLICWVPYASVAFY). Residues 275–286 (IFTNQGSDFGPI) lie on the Extracellular side of the membrane. Residues 287-308 (FMTIPAFFAKSSAIYNPVIYIV) form a helical membrane-spanning segment. Lysine 296 is modified (N6-(retinylidene)lysine). At 309-351 (MNKQFRNCMITTLCCGKNPLGDEDTSAGKTETSSVSTSQVSPA) the chain is on the cytoplasmic side. 2 S-palmitoyl cysteine lipidation sites follow: cysteine 322 and cysteine 323. The interval 331–351 (EDTSAGKTETSSVSTSQVSPA) is disordered. A compositionally biased stretch (low complexity) spans 340–351 (TSSVSTSQVSPA). Residue serine 341 is modified to Phosphoserine; by RK and GRK7.

Belongs to the G-protein coupled receptor 1 family. Opsin subfamily. Post-translationally, contains one covalently linked retinal chromophore. Upon light absorption, the covalently bound 11-cis-retinal is converted to all-trans-retinal. After hydrolysis of the Schiff base and release of the covalently bound all-trans-retinal, active rhodopsin is regenerated by binding of a fresh molecule of 11-cis-retinal.

Its subcellular location is the membrane. It is found in the cell projection. The protein resides in the cilium. It localises to the photoreceptor outer segment. In terms of biological role, photoreceptor required for image-forming vision at low light intensity. Required for photoreceptor cell viability after birth. Light-induced isomerization of 11-cis to all-trans retinal triggers a conformational change that activates signaling via G-proteins. Subsequent receptor phosphorylation mediates displacement of the bound G-protein alpha subunit by arrestin and terminates signaling. The protein is Rhodopsin (RHO) of Gallus gallus (Chicken).